The sequence spans 140 residues: Ribonuclease P protein subunit p20 (140 aa).

Belongs to the histone-like Alba family. In terms of assembly, component of nuclear RNase P and RNase MRP complexes. RNase P consists of a catalytic RNA moiety and 10 different protein chains; POP1, POP4, POP5, POP7, RPP14, RPP21, RPP25, RPP30, RPP38 and RPP40. Within the RNase P complex, POP1, POP7 and RPP25 form the 'finger' subcomplex, POP5, RPP14, RPP40 and homodimeric RPP30 form the 'palm' subcomplex, and RPP21, POP4 and RPP38 form the 'wrist' subcomplex. All subunits of the RNase P complex interact with the catalytic RNA. Several subunits of RNase P are also part of the RNase MRP complex. RNase MRP consists of a catalytic RNA moiety and about 8 protein subunits; POP1, POP7, RPP25, RPP30, RPP38, RPP40 and possibly also POP4 and POP5. Interacts with SMN1. POP7 forms a heterodimer with RPP25 that binds to the P3 stem loop of the catalytic RNA.

The protein localises to the nucleus. It is found in the nucleolus. The protein resides in the cytoplasm. Its subcellular location is the cytoplasmic granule. Its function is as follows. Component of ribonuclease P, a ribonucleoprotein complex that generates mature tRNA molecules by cleaving their 5'-ends. Also a component of the MRP ribonuclease complex, which cleaves pre-rRNA sequences. In Bos taurus (Bovine), this protein is Ribonuclease P protein subunit p20 (POP7).